A 57-amino-acid polypeptide reads, in one-letter code: Preprotein translocase subunit SecG (57 aa).

The Cytoplasmic segment spans residues 1–33 (MARRRKYEGLNPFVAAGLIKFSEEGELERIKLN). A helical membrane pass occupies residues 34 to 55 (PRTAILVSITVIIAILVLNILH). Over 56 to 57 (PL) the chain is Extracellular.

It belongs to the SEC61-beta family. Component of the protein translocase complex. Heterotrimer consisting of alpha (SecY), beta (SecG) and gamma (SecE) subunits. Can form oligomers of the heterotrimer.

Its subcellular location is the cell membrane. Involved in protein export. The function of the beta subunit is unknown, but it may be involved in stabilization of the trimeric complex. This chain is Preprotein translocase subunit SecG, found in Pyrobaculum islandicum (strain DSM 4184 / JCM 9189 / GEO3).